A 155-amino-acid polypeptide reads, in one-letter code: Fibroblast growth factor 1 (155 aa).

Ala-2 is modified (N-acetylalanine). Positions 2–15 (AEGEITTFSALTER) are excised as a propeptide. Position 33 (Asn-33) interacts with heparin. Residues 127 to 143 (KKNGSCKRGPRTHYGQK) form a heparin-binding region.

Belongs to the heparin-binding growth factors family. In terms of assembly, monomer. Homodimer. Interacts with FGFR1, FGFR2, FGFR3 and FGFR4. Affinity between fibroblast growth factors (FGFs) and their receptors is increased by heparan sulfate glycosaminoglycans that function as coreceptors. Found in a complex with FGFBP1, FGF1 and FGF2. Interacts with FGFBP1. Part of a Cu(2+)-dependent multiprotein aggregate containing FGF1, S100A13 and SYT1. Interacts with SYT1. Interacts with S100A13. Interacts with LRRC59. Interacts with CSNKA, CSNKB and FIBP. While binding with LRRC59, CSNKA and FIBP seem mutually exclusive, CSNKB and FIBP may cooperatively interact with FGF1. Forms a ternary complex with FGFR1 and ITGAV:ITGB3 and induces the recruitment of PTPN11 to the complex. In terms of processing, in the nucleus, phosphorylated by PKC/PRKCD.

The protein localises to the secreted. It is found in the cytoplasm. Its subcellular location is the cell cortex. It localises to the cytosol. The protein resides in the nucleus. In terms of biological role, plays an important role in the regulation of cell survival, cell division, angiogenesis, cell differentiation and cell migration. Functions as a potent mitogen in vitro. Acts as a ligand for FGFR1 and integrins. Binds to FGFR1 in the presence of heparin leading to FGFR1 dimerization and activation via sequential autophosphorylation on tyrosine residues which act as docking sites for interacting proteins, leading to the activation of several signaling cascades. Binds to integrin ITGAV:ITGB3. Its binding to integrin, subsequent ternary complex formation with integrin and FGFR1, and the recruitment of PTPN11 to the complex are essential for FGF1 signaling. Induces the phosphorylation and activation of FGFR1, FRS2, MAPK3/ERK1, MAPK1/ERK2 and AKT1. Can induce angiogenesis. The polypeptide is Fibroblast growth factor 1 (FGF1) (Mesocricetus auratus (Golden hamster)).